Reading from the N-terminus, the 312-residue chain is Glyoxylate/hydroxypyruvate reductase A (312 aa).

The active site involves R227. Residue H275 is the Proton donor of the active site.

Belongs to the D-isomer specific 2-hydroxyacid dehydrogenase family. GhrA subfamily.

The protein resides in the cytoplasm. It carries out the reaction glycolate + NADP(+) = glyoxylate + NADPH + H(+). The enzyme catalyses (R)-glycerate + NAD(+) = 3-hydroxypyruvate + NADH + H(+). The catalysed reaction is (R)-glycerate + NADP(+) = 3-hydroxypyruvate + NADPH + H(+). In terms of biological role, catalyzes the NADPH-dependent reduction of glyoxylate and hydroxypyruvate into glycolate and glycerate, respectively. This Klebsiella pneumoniae subsp. pneumoniae (strain ATCC 700721 / MGH 78578) protein is Glyoxylate/hydroxypyruvate reductase A.